Here is a 518-residue protein sequence, read N- to C-terminus: Glutamate--cysteine ligase (518 aa).

This sequence belongs to the glutamate--cysteine ligase type 1 family. Type 1 subfamily.

The enzyme catalyses L-cysteine + L-glutamate + ATP = gamma-L-glutamyl-L-cysteine + ADP + phosphate + H(+). It participates in sulfur metabolism; glutathione biosynthesis; glutathione from L-cysteine and L-glutamate: step 1/2. The chain is Glutamate--cysteine ligase from Escherichia coli O8 (strain IAI1).